We begin with the raw amino-acid sequence, 639 residues long: Threonine--tRNA ligase (639 aa).

The region spanning 1–62 is the TGS domain; that stretch reads MYQLTLPDKS…ETDANIEVLT (62 aa). The tract at residues 246 to 537 is catalytic; it reads DHRKIGKELD…LIEHYEGKFP (292 aa). Zn(2+) is bound by residues Cys337, His388, and His514.

It belongs to the class-II aminoacyl-tRNA synthetase family. In terms of assembly, homodimer. It depends on Zn(2+) as a cofactor.

It is found in the cytoplasm. It carries out the reaction tRNA(Thr) + L-threonine + ATP = L-threonyl-tRNA(Thr) + AMP + diphosphate + H(+). Functionally, catalyzes the attachment of threonine to tRNA(Thr) in a two-step reaction: L-threonine is first activated by ATP to form Thr-AMP and then transferred to the acceptor end of tRNA(Thr). Also edits incorrectly charged L-seryl-tRNA(Thr). The polypeptide is Threonine--tRNA ligase (Leptospira borgpetersenii serovar Hardjo-bovis (strain JB197)).